We begin with the raw amino-acid sequence, 294 residues long: ATP synthase gamma chain (294 aa).

The protein belongs to the ATPase gamma chain family. As to quaternary structure, F-type ATPases have 2 components, CF(1) - the catalytic core - and CF(0) - the membrane proton channel. CF(1) has five subunits: alpha(3), beta(3), gamma(1), delta(1), epsilon(1). CF(0) has three main subunits: a, b and c.

Its subcellular location is the cell inner membrane. In terms of biological role, produces ATP from ADP in the presence of a proton gradient across the membrane. The gamma chain is believed to be important in regulating ATPase activity and the flow of protons through the CF(0) complex. This is ATP synthase gamma chain from Nitrosomonas europaea (strain ATCC 19718 / CIP 103999 / KCTC 2705 / NBRC 14298).